Reading from the N-terminus, the 213-residue chain is Gas vesicle protein F1 (213 aa).

This sequence belongs to the gas vesicle GvpF/GvpL family. In terms of assembly, binds GvpA1 in early growth stages; is the only one of GvpF1 to GvpM1 that interacts with GvpA1 in H.volcanii experiments. GvpF to GvpM interact with each other in vitro, and may form multi-subunit complex(es). Interacts with GvpC1 and GvpO1.

It is found in the gas vesicle. The protein resides in the cytoplasm. Functionally, might be involved in preventing aggregation of GvpA1. Proteins GvpF to GvpM might be involved in nucleating gas vesicle formation. A minor component of the gas vesicle, also found in soluble extracts. Gas vesicles are hollow, gas filled proteinaceous nanostructures found in several microbial planktonic microorganisms. They allow positioning of halobacteria at the optimal depth for growth in the poorly aerated, shallow brine pools of their habitat. Its function is as follows. Expression of a 9.5 kb p-vac DNA fragment containing 2 divergently transcribed regions (gvpD-gvpE-gvpF-gvpG-gvpH-gvpI-gvpJ-gvpK-gvpL-gvpM and gvpA-gvpC-gvpN-gvpO) allows H.volcanii to produce gas vesicles. A minimal gas vesicle can be made in H.volcanii by gvpA1-gvpO1 plus gvpF1-gvpG1-gvpJ1-gvpK1-gvpL1-gvpM1; lack of enough GvpJ1 prevents formation. The same region restores gas vesicle production in H.halobium without the p-vac locus. In Halobacterium salinarum (strain ATCC 700922 / JCM 11081 / NRC-1) (Halobacterium halobium), this protein is Gas vesicle protein F1 (gvpF11).